The primary structure comprises 516 residues: Membrane-bound transcription factor site-2 protease (516 aa).

Over Met-1–Pro-3 the chain is Cytoplasmic. The chain crosses the membrane as a helical span at residues Val-4–Leu-24. Topologically, residues Lys-25–Gln-74 are lumenal. The next 2 membrane-spanning stretches (helical) occupy residues Trp-75–Gly-95 and Lys-96–Ala-107. The Lumenal segment spans residues Asp-108–Gln-141. Residues Val-142–Val-166 form a helical membrane-spanning segment. His-168 contacts Zn(2+). The active site involves Glu-169. The next 3 helical transmembrane spans lie at Gly-171 to Phe-183, Asn-184 to Leu-206, and Phe-226 to Tyr-248. Zn(2+) is bound at residue His-172. Residues Thr-249–Lys-443 lie on the Lumenal side of the membrane. Residue Asn-334 is glycosylated (N-linked (GlcNAc...) asparagine). Transmembrane regions (helical) follow at residues Tyr-444–Phe-461 and Ala-462–Leu-473. Over Asp-474–Leu-489 the chain is Lumenal. A helical membrane pass occupies residues Ile-490–Leu-510. Over Trp-511 to Arg-516 the chain is Cytoplasmic.

It belongs to the peptidase M50A family. Zn(2+) serves as cofactor.

It localises to the membrane. The protein localises to the cytoplasm. The protein resides in the golgi apparatus membrane. It catalyses the reaction Cleaves several transcription factors that are type-2 transmembrane proteins within membrane-spanning domains. Known substrates include sterol regulatory element-binding protein (SREBP) -1, SREBP-2 and forms of the transcriptional activator ATF6. SREBP-2 is cleaved at the site 477-DRSRILL-|-CVLTFLCLSFNPLTSLLQWGGA-505. The residues Asn-Pro, 11 residues distal to the site of cleavage in the membrane-spanning domain, are important for cleavage by S2P endopeptidase. Replacement of either of these residues does not prevent cleavage, but there is no cleavage if both of these residues are replaced.. Zinc metalloprotease that mediates intramembrane proteolysis of proteins such as ATF6, ATF6B, SREBF1/SREBP1 and SREBF2/SREBP2. Catalyzes the second step in the proteolytic activation of the sterol regulatory element-binding proteins (SREBPs) SREBF1/SREBP1 and SREBF2/SREBP2: cleaves SREBPs within the first transmembrane segment, thereby releasing the N-terminal segment with a portion of the transmembrane segment attached. Mature N-terminal SREBP fragments shuttle to the nucleus and activate gene transcription. Also mediates the second step in the proteolytic activation of the cyclic AMP-dependent transcription factor ATF-6 (ATF6 and ATF6B). Involved in intramembrane proteolysis during bone formation. In astrocytes and osteoblasts, upon DNA damage and ER stress, mediates the second step of the regulated intramembrane proteolytic activation of the transcription factor CREB3L1, leading to the inhibition of cell-cycle progression. This chain is Membrane-bound transcription factor site-2 protease, found in Bos taurus (Bovine).